We begin with the raw amino-acid sequence, 111 residues long: Mitochondrial import inner membrane translocase subunit Tim10B (111 aa).

Residues 24-48 (CFNACARDYTTSTLTKDEGSCVSQC) carry the Twin CX3C motif motif. 2 disulfide bridges follow: cysteine 24/cysteine 48 and cysteine 28/cysteine 44. The tract at residues 73–111 (KQGEQSPTEAIKSAKPEPAVPAPEATPVETTPVIEENKQ) is disordered. The span at 94-105 (APEATPVETTPV) shows a compositional bias: low complexity.

The protein belongs to the small Tim family. Component of the TIM22 complex, whose core is composed of tim-22, associated with peripheral protein tin-9.2/tim-10b and the 70 kDa heterohexamer. In most cases, the 70 kDa complex is composed of TIMM9 and TIMM10.

It localises to the mitochondrion inner membrane. Its function is as follows. Component of the TIM22 complex, a complex that mediates the import and insertion of multi-pass transmembrane proteins into the mitochondrial inner membrane. The TIM22 complex forms a twin-pore translocase that uses the membrane potential as the external driving force. In the TIM22 complex, it may act as a docking point for the soluble 70 kDa complex that guides the target proteins in transit through the aqueous mitochondrial intermembrane space. This chain is Mitochondrial import inner membrane translocase subunit Tim10B (tin-9.2), found in Caenorhabditis elegans.